A 195-amino-acid chain; its full sequence is Coagulogen (195 aa).

An N-terminal signal peptide occupies residues 1–20; sequence MEKKLLGIAILFVTVVSVLA. 8 disulfides stabilise this stretch: Cys28/Cys188, Cys30/Cys115, Cys80/Cys182, Cys85/Cys141, Cys95/Cys189, Cys108/Cys161, Cys147/Cys191, and Cys155/Cys193.

It belongs to the coagulin family. As to quaternary structure, coagulogen is cleaved after Arg-38 and Arg-66 by a clotting enzyme contained in the hemocyte and activated by a bacterial endotoxin (lipopolysaccharide). This cleavage releases the peptide C and leaves 2 chains of coagulin, A and B, linked by two disulfide bonds. Coagulin molecules interlink to form a gel. In terms of tissue distribution, hemolymph.

The protein localises to the secreted. Coagulogen is a gel-forming protein of hemolymph; it hinders the spread of invaders by immobilizing them. This Limulus polyphemus (Atlantic horseshoe crab) protein is Coagulogen.